The following is a 391-amino-acid chain: S-adenosylmethionine synthase 5 (391 aa).

A Mg(2+)-binding site is contributed by Glu9. An ATP-binding site is contributed by His15. Glu43 lines the K(+) pocket. L-methionine is bound by residues Glu56 and Gln99. ATP is bound by residues 167-169, 235-238, Asp246, 252-253, Ala269, Lys273, and Lys277; these read DGK, SGRF, and RK. Asp246 provides a ligand contact to L-methionine. L-methionine is bound at residue Lys277.

This sequence belongs to the AdoMet synthase family. As to quaternary structure, homotetramer. It depends on Mn(2+) as a cofactor. Mg(2+) is required as a cofactor. Co(2+) serves as cofactor. Requires K(+) as cofactor.

The protein resides in the cytoplasm. The catalysed reaction is L-methionine + ATP + H2O = S-adenosyl-L-methionine + phosphate + diphosphate. It functions in the pathway amino-acid biosynthesis; S-adenosyl-L-methionine biosynthesis; S-adenosyl-L-methionine from L-methionine: step 1/1. In terms of biological role, catalyzes the formation of S-adenosylmethionine from methionine and ATP. The reaction comprises two steps that are both catalyzed by the same enzyme: formation of S-adenosylmethionine (AdoMet) and triphosphate, and subsequent hydrolysis of the triphosphate. The protein is S-adenosylmethionine synthase 5 (METK5) of Vitis vinifera (Grape).